Here is a 252-residue protein sequence, read N- to C-terminus: 5-oxoprolinase subunit A (252 aa).

The protein belongs to the LamB/PxpA family. In terms of assembly, forms a complex composed of PxpA, PxpB and PxpC.

The catalysed reaction is 5-oxo-L-proline + ATP + 2 H2O = L-glutamate + ADP + phosphate + H(+). Its function is as follows. Catalyzes the cleavage of 5-oxoproline to form L-glutamate coupled to the hydrolysis of ATP to ADP and inorganic phosphate. This is 5-oxoprolinase subunit A from Staphylococcus carnosus (strain TM300).